Consider the following 301-residue polypeptide: MANAVVAIAGSSGLIGSALTAALRAADHTVLRIVRRAPANSEELHWNPESGEFDPHALTDVDAVVNLCGVNIAQRRWSGAFKQSLRDSRITPTEVLSAAVADAGVATLINASAVGYYGNTKDRVVDENDSAGTGFLAQLCVDWETATRPAQQSGARVVLARTGVVLSPAGGMLRRMRPLFSVGLGARLGSGRQYMSWISLEDEVRALQFAIAQPNLSGPVNLTGPAPVTNAEFTTAFGRAVNRPTPLMLPSVAVRAAFGEFADEGLLIGQRAIPSALERAGFQFHHNTIGEALGYATTRPG.

The protein belongs to the NAD(P)-dependent epimerase/dehydratase family. SDR39U1 subfamily.

The polypeptide is Epimerase family protein Mb2239 (Mycobacterium bovis (strain ATCC BAA-935 / AF2122/97)).